We begin with the raw amino-acid sequence, 210 residues long: MANEERTIPETNVASERPEDPVESQTRAEGGEQIQEAAPETAELEAVQQLLEDARSKADEHWNELLRARAELENQRRRHERELEKGRKYALEKFAQDLLPVKDSLEMGLAAAQAEDANVTALREGTELILKMFNEVAARFGIETIDPQGEAFNPDFHQAISTQESSEAAPDTVLTVVRKGYALNGRLLRPAMVVVSKPGEQTTAGVDTQA.

Residues 1-42 (MANEERTIPETNVASERPEDPVESQTRAEGGEQIQEAAPETA) are disordered.

Belongs to the GrpE family. Homodimer.

It is found in the cytoplasm. Functionally, participates actively in the response to hyperosmotic and heat shock by preventing the aggregation of stress-denatured proteins, in association with DnaK and GrpE. It is the nucleotide exchange factor for DnaK and may function as a thermosensor. Unfolded proteins bind initially to DnaJ; upon interaction with the DnaJ-bound protein, DnaK hydrolyzes its bound ATP, resulting in the formation of a stable complex. GrpE releases ADP from DnaK; ATP binding to DnaK triggers the release of the substrate protein, thus completing the reaction cycle. Several rounds of ATP-dependent interactions between DnaJ, DnaK and GrpE are required for fully efficient folding. The polypeptide is Protein GrpE (Nitrosococcus oceani (strain ATCC 19707 / BCRC 17464 / JCM 30415 / NCIMB 11848 / C-107)).